The chain runs to 179 residues: Adenine phosphoribosyltransferase (179 aa).

Belongs to the purine/pyrimidine phosphoribosyltransferase family. As to quaternary structure, homodimer.

Its subcellular location is the cytoplasm. The enzyme catalyses AMP + diphosphate = 5-phospho-alpha-D-ribose 1-diphosphate + adenine. Its pathway is purine metabolism; AMP biosynthesis via salvage pathway; AMP from adenine: step 1/1. Functionally, catalyzes a salvage reaction resulting in the formation of AMP, that is energically less costly than de novo synthesis. The polypeptide is Adenine phosphoribosyltransferase (Nitrobacter hamburgensis (strain DSM 10229 / NCIMB 13809 / X14)).